The primary structure comprises 360 residues: Mitogen-activated protein kinase 1 (360 aa).

An N-acetylalanine modification is found at Ala-2. One can recognise a Protein kinase domain in the interval 25-313 (YTNLSYIGEG…VEQALAHPYL (289 aa)). Ser-29 carries the post-translational modification Phosphoserine; by SGK1. ATP-binding positions include 31 to 39 (IGEGAYGMV) and Lys-54. Asp-149 acts as the Proton acceptor in catalysis. Thr-185 carries the phosphothreonine; by MAP2K1 and MAP2K2 modification. The TXY motif lies at 185–187 (TEY). At Tyr-187 the chain carries Phosphotyrosine; by MAP2K1 and MAP2K2. Thr-190 is subject to Phosphothreonine; by autocatalysis. A phosphoserine mark is found at Ser-246, Ser-248, and Ser-284.

This sequence belongs to the protein kinase superfamily. CMGC Ser/Thr protein kinase family. MAP kinase subfamily. Binds both upstream activators and downstream substrates in multimolecular complexes. Interacts with ADAM15, ARHGEF2, ARRB2, DAPK1 (via death domain), HSF4, IER3, IPO7, MKNK2, MORG1, NISCH, PEA15, SGK1, and isoform 1 of NEK2. Interacts (via phosphorylated form) with TPR (via C-terminal region and phosphorylated form); the interaction requires dimerization of MAPK1/ERK2 and increases following EGF stimulation. Interacts with MAP2K1. Interacts with DUSP6. Interacts (phosphorylated form) with CAV2 ('Tyr-19'-phosphorylated form); the interaction, promoted by insulin, leads to nuclear location and MAPK1 activation. MKNK2 isoform 1 binding prevents from dephosphorylation and inactivation. Interacts with DCC. The phosphorylated form interacts with PML. Interacts with STYX. Interacts with CDK2AP2. Interacts with CAVIN4. Interacts with DUSP7; the interaction enhances DUSP7 phosphatase activity. Interacts with GIT1; this interaction is necessary for MAPK1 localization to focal adhesions. Interacts with ZNF263. Interacts with phosphoglycerate kinase PGK1; the interaction is direct, occurs under hypoxic conditions, and promotes interaction between PGK1 and PIN1. It depends on Mg(2+) as a cofactor. Post-translationally, dually phosphorylated on Thr-185 and Tyr-187, which activates the enzyme. Phosphorylated upon FLT3 and KIT signaling. Phosphorylation on Ser-29 by SGK1 results in its activation by enhancing its interaction with MAP2K1/MEK1 and MAP2K2/MEK2. Phosphorylation at Ser-246 and Ser-248 as well as autophosphorylation at Thr-190 promote nuclear localization. Ligand-activated ALK induces tyrosine phosphorylation. Dephosphorylated by PTPRJ at Tyr-187. Dephosphorylated by DUSP1 and DUSP2 at Thr-185 and Tyr-187. In terms of processing, ISGylated. Ubiquitinated by TRIM15 via 'Lys-63'-linked ubiquitination; leading to activation. Deubiquitinated by CYLD.

Its subcellular location is the nucleus. The protein resides in the cytoplasm. It is found in the cytoskeleton. It localises to the microtubule organizing center. The protein localises to the centrosome. Its subcellular location is the spindle. The protein resides in the membrane. It is found in the caveola. It localises to the cell junction. The protein localises to the focal adhesion. It catalyses the reaction L-seryl-[protein] + ATP = O-phospho-L-seryl-[protein] + ADP + H(+). It carries out the reaction L-threonyl-[protein] + ATP = O-phospho-L-threonyl-[protein] + ADP + H(+). With respect to regulation, phosphorylated by MAP2K1/MEK1 and MAP2K2/MEK2 on Thr-185 and Tyr-187 in response to external stimuli like insulin or NGF. Both phosphorylations are required for activity. This phosphorylation causes dramatic conformational changes, which enable full activation and interaction of MAPK1/ERK2 with its substrates. Phosphorylation on Ser-29 by SGK1 results in its activation by enhancing its interaction with MAP2K1/MEK1 and MAP2K2/MEK2. Dephosphorylated and inactivated by DUSP1, DUSP3, DUSP6 and DUSP9. Inactivated by pyrimidylpyrrole inhibitors. Its function is as follows. Serine/threonine kinase which acts as an essential component of the MAP kinase signal transduction pathway. MAPK1/ERK2 and MAPK3/ERK1 are the 2 MAPKs which play an important role in the MAPK/ERK cascade. They participate also in a signaling cascade initiated by activated KIT and KITLG/SCF. Depending on the cellular context, the MAPK/ERK cascade mediates diverse biological functions such as cell growth, adhesion, survival and differentiation through the regulation of transcription, translation, cytoskeletal rearrangements. The MAPK/ERK cascade also plays a role in initiation and regulation of meiosis, mitosis, and postmitotic functions in differentiated cells by phosphorylating a number of transcription factors. About 160 substrates have already been discovered for ERKs. Many of these substrates are localized in the nucleus, and seem to participate in the regulation of transcription upon stimulation. However, other substrates are found in the cytosol as well as in other cellular organelles, and those are responsible for processes such as translation, mitosis and apoptosis. Moreover, the MAPK/ERK cascade is also involved in the regulation of the endosomal dynamics, including lysosome processing and endosome cycling through the perinuclear recycling compartment (PNRC); as well as in the fragmentation of the Golgi apparatus during mitosis. The substrates include transcription factors (such as ATF2, BCL6, ELK1, ERF, FOS, HSF4 or SPZ1), cytoskeletal elements (such as CANX, CTTN, GJA1, MAP2, MAPT, PXN, SORBS3 or STMN1), regulators of apoptosis (such as BAD, BTG2, CASP9, DAPK1, IER3, MCL1 or PPARG), regulators of translation (such as EIF4EBP1 and FXR1) and a variety of other signaling-related molecules (like ARHGEF2, DCC, FRS2 or GRB10). Protein kinases (such as RAF1, RPS6KA1/RSK1, RPS6KA3/RSK2, RPS6KA2/RSK3, RPS6KA6/RSK4, SYK, MKNK1/MNK1, MKNK2/MNK2, RPS6KA5/MSK1, RPS6KA4/MSK2, MAPKAPK3 or MAPKAPK5) and phosphatases (such as DUSP1, DUSP4, DUSP6 or DUSP16) are other substrates which enable the propagation the MAPK/ERK signal to additional cytosolic and nuclear targets, thereby extending the specificity of the cascade. Mediates phosphorylation of TPR in response to EGF stimulation. May play a role in the spindle assembly checkpoint. Phosphorylates PML and promotes its interaction with PIN1, leading to PML degradation. Phosphorylates CDK2AP2. Phosphorylates phosphoglycerate kinase PGK1 under hypoxic conditions to promote its targeting to the mitochondrion and suppress the formation of acetyl-coenzyme A from pyruvate. In terms of biological role, acts as a transcriptional repressor. Binds to a [GC]AAA[GC] consensus sequence. Repress the expression of interferon gamma-induced genes. Seems to bind to the promoter of CCL5, DMP1, IFIH1, IFITM1, IRF7, IRF9, LAMP3, OAS1, OAS2, OAS3 and STAT1. Transcriptional activity is independent of kinase activity. In Bos taurus (Bovine), this protein is Mitogen-activated protein kinase 1.